Reading from the N-terminus, the 226-residue chain is SURF1-like protein (226 aa).

The next 2 membrane-spanning stretches (helical) occupy residues 3–23 (TNLVVLITFTILISLGFWQLS) and 199–219 (LEYALTWFGLAISLIVIYVIY).

The protein belongs to the SURF1 family.

It is found in the cell membrane. This is SURF1-like protein from Rickettsia felis (strain ATCC VR-1525 / URRWXCal2) (Rickettsia azadi).